The primary structure comprises 260 residues: Circadian clock-controlled protein daywake (260 aa).

Positions 1–25 (MQLTSASVCLLWMGLLSWVSHRIDA) are cleaved as a signal peptide.

The protein belongs to the TO family.

Component of the circadian clock or downstream effector of clock function. Required for suppressing daytime sleep (siesta) under ambient environmental temperatures. Part of a heat avoidance mechanism that modulates daytime sleep behavior under different environmental temperatures to minimize the risk of heat exposure. Under cooler ambient temperatures, suppresses daytime sleep (siesta) and thus allows for longer periods of daytime activity. This Drosophila yakuba (Fruit fly) protein is Circadian clock-controlled protein daywake.